We begin with the raw amino-acid sequence, 79 residues long: MPKRILQGVVVGDKNEKTVVVRVERRFAHPLLQKTVRRSKKYKAHDENNQYKIGDTVSIEECAPISKDKRWTVISAQGQ.

The protein belongs to the universal ribosomal protein uS17 family. As to quaternary structure, part of the 30S ribosomal subunit.

One of the primary rRNA binding proteins, it binds specifically to the 5'-end of 16S ribosomal RNA. In Rhizobium leguminosarum bv. trifolii (strain WSM2304), this protein is Small ribosomal subunit protein uS17.